The chain runs to 503 residues: Carboxyl-terminal PDZ ligand of neuronal nitric oxide synthase protein (503 aa).

Residues 26–191 enclose the PID domain; that stretch reads FQHGISFEAK…ESERNSDGSG (166 aa). The interval 170-212 is disordered; sequence HTQQNADGQEDGESERNSDGSGDPGRQLTGAERVSTAAAEETD. Serine 183, serine 187, serine 190, and serine 262 each carry phosphoserine. Residues 318–359 are a coiled coil; sequence AAEAAARLEAQARVHQLLLQNKDMLQHISLLVKQVQELELKL. 4 positions are modified to phosphoserine: serine 367, serine 370, serine 397, and serine 413. The interaction with NOS1 stretch occupies residues 491–503; sequence QELGDSLDDEIAV. The short motif at 501-503 is the PDZ-binding element; the sequence is IAV.

As to quaternary structure, interacts with the PDZ domain of NOS1 or the second PDZ domain of DLG4 through its C-terminus. Interacts with RASD1 and SYN1, SYN2 and SYN3 via its PID domain. Forms a ternary complex with NOS1 and SYN1. Forms a ternary complex with NOS1 and RASD1.

Its subcellular location is the cell projection. The protein resides in the filopodium. It localises to the podosome. In terms of biological role, adapter protein involved in neuronal nitric-oxide (NO) synthesis regulation via its association with nNOS/NOS1. The complex formed with NOS1 and synapsins is necessary for specific NO and synapsin functions at a presynaptic level. Mediates an indirect interaction between NOS1 and RASD1 leading to enhance the ability of NOS1 to activate RASD1. Competes with DLG4 for interaction with NOS1, possibly affecting NOS1 activity by regulating the interaction between NOS1 and DLG4. In kidney podocytes, plays a role in podosomes and filopodia formation through CDC42 activation. This Mus musculus (Mouse) protein is Carboxyl-terminal PDZ ligand of neuronal nitric oxide synthase protein.